A 521-amino-acid chain; its full sequence is Zinc finger and BTB domain-containing protein 18 (521 aa).

Positions 24–91 constitute a BTB domain; sequence CDCTVLVGDA…MYEGKLQFKD (68 aa). The segment at 190 to 230 is disordered; the sequence is DSASIPQTGGEAETHTAAAGKTADSPCSSTGSLSHRSATSM. The span at 197–212 shows a compositional bias: low complexity; it reads TGGEAETHTAAAGKTA. Polar residues predominate over residues 214 to 230; the sequence is SPCSSTGSLSHRSATSM. C2H2-type zinc fingers lie at residues 369 to 391, 409 to 431, 437 to 459, and 465 to 488; these read FMCP…LSTH, PTCS…ERTH, FTCT…AVVH, and HACK…RKFH.

It belongs to the krueppel C2H2-type zinc-finger protein family. ZBTB18 subfamily.

The protein localises to the nucleus. In terms of biological role, transcriptional repressor that plays a role in various developmental processes. Specifically binds the consensus DNA sequence 5'-[AC]ACATCTG[GT][AC]-3' which contains the E box core, and acts by recruiting chromatin remodeling multiprotein complexes. This chain is Zinc finger and BTB domain-containing protein 18 (zbtb18), found in Xenopus tropicalis (Western clawed frog).